The following is a 553-amino-acid chain: Arginine--tRNA ligase (553 aa).

The 'HIGH' region motif lies at 130-140 (ANPTGPVHLGG).

This sequence belongs to the class-I aminoacyl-tRNA synthetase family. Monomer.

It localises to the cytoplasm. It catalyses the reaction tRNA(Arg) + L-arginine + ATP = L-arginyl-tRNA(Arg) + AMP + diphosphate. The polypeptide is Arginine--tRNA ligase (Saccharopolyspora erythraea (strain ATCC 11635 / DSM 40517 / JCM 4748 / NBRC 13426 / NCIMB 8594 / NRRL 2338)).